We begin with the raw amino-acid sequence, 537 residues long: uncharacterized protein (537 aa).

This sequence belongs to the RuBisCO large chain family. Type IV subfamily.

Its function is as follows. Unknown. Probably does not have RuBisCO activity. This is an uncharacterized protein from Symbiodinium sp. (Dinoflagellate).